The following is a 279-amino-acid chain: uncharacterized protein (279 aa).

Residues 1–19 (MKLKLYLIPLLASGIILSA) form the signal peptide. The N-palmitoyl cysteine moiety is linked to residue cysteine 20. A lipid anchor (S-diacylglycerol cysteine) is attached at cysteine 20.

It belongs to the MG439/MG440 family.

The protein localises to the cell membrane. This is an uncharacterized protein from Mycoplasma pneumoniae (strain ATCC 29342 / M129 / Subtype 1) (Mycoplasmoides pneumoniae).